Here is a 216-residue protein sequence, read N- to C-terminus: Phosphatidylserine decarboxylase proenzyme (216 aa).

Serine 185 (schiff-base intermediate with substrate; via pyruvic acid) is an active-site residue. Serine 185 carries the post-translational modification Pyruvic acid (Ser); by autocatalysis.

It belongs to the phosphatidylserine decarboxylase family. PSD-A subfamily. As to quaternary structure, heterodimer of a large membrane-associated beta subunit and a small pyruvoyl-containing alpha subunit. Pyruvate is required as a cofactor. Post-translationally, is synthesized initially as an inactive proenzyme. Formation of the active enzyme involves a self-maturation process in which the active site pyruvoyl group is generated from an internal serine residue via an autocatalytic post-translational modification. Two non-identical subunits are generated from the proenzyme in this reaction, and the pyruvate is formed at the N-terminus of the alpha chain, which is derived from the carboxyl end of the proenzyme. The post-translation cleavage follows an unusual pathway, termed non-hydrolytic serinolysis, in which the side chain hydroxyl group of the serine supplies its oxygen atom to form the C-terminus of the beta chain, while the remainder of the serine residue undergoes an oxidative deamination to produce ammonia and the pyruvoyl prosthetic group on the alpha chain.

The protein resides in the cell membrane. It carries out the reaction a 1,2-diacyl-sn-glycero-3-phospho-L-serine + H(+) = a 1,2-diacyl-sn-glycero-3-phosphoethanolamine + CO2. Its pathway is phospholipid metabolism; phosphatidylethanolamine biosynthesis; phosphatidylethanolamine from CDP-diacylglycerol: step 2/2. Functionally, catalyzes the formation of phosphatidylethanolamine (PtdEtn) from phosphatidylserine (PtdSer). This Nitrosomonas eutropha (strain DSM 101675 / C91 / Nm57) protein is Phosphatidylserine decarboxylase proenzyme.